The primary structure comprises 387 residues: Anhydro-N-acetylmuramic acid kinase (387 aa).

9–16 (GTSADGVD) is a binding site for ATP.

This sequence belongs to the anhydro-N-acetylmuramic acid kinase family.

It catalyses the reaction 1,6-anhydro-N-acetyl-beta-muramate + ATP + H2O = N-acetyl-D-muramate 6-phosphate + ADP + H(+). It functions in the pathway amino-sugar metabolism; 1,6-anhydro-N-acetylmuramate degradation. It participates in cell wall biogenesis; peptidoglycan recycling. In terms of biological role, catalyzes the specific phosphorylation of 1,6-anhydro-N-acetylmuramic acid (anhMurNAc) with the simultaneous cleavage of the 1,6-anhydro ring, generating MurNAc-6-P. Is required for the utilization of anhMurNAc either imported from the medium or derived from its own cell wall murein, and thus plays a role in cell wall recycling. This is Anhydro-N-acetylmuramic acid kinase from Synechococcus sp. (strain WH7803).